The sequence spans 293 residues: ELMO domain-containing protein 2 (293 aa).

In terms of domain architecture, ELMO spans 126–282 (QHEKMLLKLW…KFHERIKGLL (157 aa)).

Acts as a GTPase-activating protein (GAP) toward guanine nucleotide exchange factors like ARL2, ARL3, ARF1 and ARF6, but not for GTPases outside the Arf family. The polypeptide is ELMO domain-containing protein 2 (Elmod2) (Mus musculus (Mouse)).